A 505-amino-acid polypeptide reads, in one-letter code: Prenylcysteine oxidase 1 (505 aa).

The N-terminal stretch at 1–27 (MGRVVAELVSSLLGLWLLLCSCGCPEG) is a signal peptide. Residues Asn-196, Asn-323, and Asn-353 are each glycosylated (N-linked (GlcNAc...) asparagine).

The protein belongs to the prenylcysteine oxidase family. Requires FAD as cofactor. Widely expressed.

Its subcellular location is the lysosome. It carries out the reaction an S-polyprenyl-L-cysteine + O2 + H2O = a polyprenal + L-cysteine + H2O2. The enzyme catalyses S-(2E,6E)-farnesyl-L-cysteine + O2 + H2O = (2E,6E)-farnesal + L-cysteine + H2O2. It catalyses the reaction [(2E,6E,10E)-geranylgeranyl]-L-cysteine + O2 + H2O = (2E,6E,10E)-geranylgeranial + L-cysteine + H2O2. Functionally, prenylcysteine oxidase that cleaves the thioether bond of prenyl-L-cysteines, such as farnesylcysteine and geranylgeranylcysteine. Only active against free prenylcysteines and not prenylcysteine residues within prenylated proteins or peptides. Involved in the final step in the degradation of prenylated proteins, by degrading prenylcysteines after the protein has been degraded. This chain is Prenylcysteine oxidase 1, found in Homo sapiens (Human).